A 1018-amino-acid chain; its full sequence is Transmembrane protein 132A (1018 aa).

A signal peptide spans 1–32 (MTERKAAAPRGPYGAWFCLLVALALEVVRVSS). At 33 to 846 (NHDTLDPIYL…VTDLELGMYA (814 aa)) the chain is on the extracellular side. Residue Asn-276 is glycosylated (N-linked (GlcNAc...) asparagine). A binds to HSPA5/GRP78 region spans residues 606 to 911 (IEVRSPLSDA…QLDRCSSSGP (306 aa)). The confers cellular localization similar to full-length form stretch occupies residues 666-1018 (LPAPKQEVAL…NYMERIRGSS (353 aa)). Residues 807–818 (ERAEEEAGKEEN) are compositionally biased toward basic and acidic residues. The segment at 807 to 833 (ERAEEEAGKEENEAKEEEEDEEEMVPA) is disordered. The span at 819–830 (EAKEEEEDEEEM) shows a compositional bias: acidic residues. Residues 847–867 (LLGIFCLAILIFLVNGVVFVL) form a helical membrane-spanning segment. Topologically, residues 868–1018 (RYQRKEPPDS…NYMERIRGSS (151 aa)) are cytoplasmic. The tract at residues 900–956 (SRQLDRCSSSGPPKGEGGCPCESGAGGDASTVAPSASESPAGSSSTLARKEAGGRRK) is disordered. Composition is skewed to low complexity over residues 906-922 (CSSSGPPKGEGGCPCES) and 932-944 (APSASESPAGSSS).

It belongs to the TMEM132 family. Interacts with HSPA5/GRP78.

It is found in the golgi apparatus membrane. It localises to the endoplasmic reticulum membrane. Its function is as follows. May play a role in embryonic and postnatal development of the brain. Increased resistance to cell death induced by serum starvation in cultured cells. Regulates cAMP-induced GFAP gene expression via STAT3 phosphorylation. In Mus musculus (Mouse), this protein is Transmembrane protein 132A (Tmem132a).